Here is a 159-residue protein sequence, read N- to C-terminus: Transcriptional repressor NrdR (159 aa).

A zinc finger spans residues 3–34 (CPFCNAADSKVIDSRLAAEGCQIRRRRECISC). In terms of domain architecture, ATP-cone spans 49–139 (PRVIKSNGKN…VYQDFQDVEA (91 aa)).

It belongs to the NrdR family. Requires Zn(2+) as cofactor.

In terms of biological role, negatively regulates transcription of bacterial ribonucleotide reductase nrd genes and operons by binding to NrdR-boxes. This is Transcriptional repressor NrdR from Acinetobacter baylyi (strain ATCC 33305 / BD413 / ADP1).